The sequence spans 318 residues: NADH-ubiquinone oxidoreductase chain 1 (318 aa).

8 helical membrane passes run 2 to 22, 70 to 90, 100 to 120, 147 to 167, 172 to 192, 222 to 242, 253 to 273, and 294 to 314; these read FMIN…FLTL, MFIL…IPLP, LGVL…LWSG, AIIL…TLII, TWLI…TLAE, LFFM…AILF, ELYT…FLWI, and LPLT…TSGI.

Belongs to the complex I subunit 1 family. In terms of assembly, core subunit of respiratory chain NADH dehydrogenase (Complex I) which is composed of 45 different subunits.

The protein localises to the mitochondrion inner membrane. It catalyses the reaction a ubiquinone + NADH + 5 H(+)(in) = a ubiquinol + NAD(+) + 4 H(+)(out). In terms of biological role, core subunit of the mitochondrial membrane respiratory chain NADH dehydrogenase (Complex I) which catalyzes electron transfer from NADH through the respiratory chain, using ubiquinone as an electron acceptor. Essential for the catalytic activity and assembly of complex I. The protein is NADH-ubiquinone oxidoreductase chain 1 (MT-ND1) of Bos mutus grunniens (Wild yak).